The following is a 252-amino-acid chain: Putative pinene synthase (252 aa).

The protein belongs to the terpene synthase family. Tpsa subfamily.

In Fragaria ananassa (Strawberry), this protein is Putative pinene synthase.